We begin with the raw amino-acid sequence, 494 residues long: DnaJ-related protein rsp1 (494 aa).

The region spanning 12–78 (DYYTILGAES…KLRELFDQRR (67 aa)) is the J domain. A compositionally biased stretch (polar residues) spans 229-242 (SEISNGLNSNGVEN). The disordered stretch occupies residues 229 to 354 (SEISNGLNSN…NDSTSNSTEY (126 aa)). Over residues 243-256 (SSITKSSPRSSSSS) the composition is skewed to low complexity. Over residues 270–287 (IFTSPNTPEHPSVYQTDI) the composition is skewed to polar residues. Over residues 321 to 331 (LSRSKSSSLSR) the composition is skewed to low complexity. The span at 332–354 (NQTRSQLNDLSAENDSTSNSTEY) shows a compositional bias: polar residues.

Interacts iwth ssa1.

The protein resides in the cytoplasm. The protein localises to the cytoskeleton. It is found in the nucleus. Functionally, has a role in the proper organization of the interphase microtubule cytoskeleton. Required for equatorial microtubule organizing center (eMTOC) disassembly into satellites, contributing to the dynamic redistribution of MTOC components for organization of interphase microtubules. In Schizosaccharomyces pombe (strain 972 / ATCC 24843) (Fission yeast), this protein is DnaJ-related protein rsp1 (rsp1).